Consider the following 705-residue polypeptide: MTRRTPIELYRNIGISAHIDAGKTTTTERILFYTGITHKLGEVHEGAAVMDWMEQEQERGITITSAATTAFWRGMAGNYPEHRINIIDTPGHVDFTIEVERSMRVLDGACMVYDSVGGVQPQSETVWRQANKYRVPRIAFVNKMDRIGADFLRVQRQIVERLKGDAVPVQLPIGAEDNFQGVVDLVKMKAILWDEASQGVSFKYEDVPAPMLELANQWRDKLVEKAAEANEVLLEKYLSGEALSEEEIKTGLRQRTIANEIVPMLCGSAFKNKGVQAMLDAVLDYLPSPLDVPAIKGHDEHDKEIERRPSDKDPFSALAFKIMTDPFVGQLVFFRAYSGVVKSGDSVLNPLKNKKERLGRILQMHANERKEINEVYAGDIAAAVGLKDVTTGDTLTDPGHVIILERMIFPEPVISQAVEPKTKADQEKMSLALNRLAQEDPSFRVRTDEESGQTIISGMGELHLEILVDRMKREFNVEATVGKPQVAYRETIRKKVEGVEGKFVKQSGGRGQYGHAVITVEPQAAGKGFEFIDAIKGGVIPREFIPAVERGIVDTLNTGVLAGYPVVDVKVTLTFGSYHDVDSNENAFRMAGSMAFKEGLRRATPVLLEPMMQVEVETPEDFTGNVMGDLSSRRGMVQGMEDIAGGGGKLVRAEVPLAEMFGYSTSLRSLTQGRATYSMEFKHYAEAPRQVAEQVIAARTGSTRA.

The 283-residue stretch at 8–290 folds into the tr-type G domain; that stretch reads ELYRNIGISA…AVLDYLPSPL (283 aa). Residues 17–24, 88–92, and 142–145 contribute to the GTP site; these read AHIDAGKT, DTPGH, and NKMD.

Belongs to the TRAFAC class translation factor GTPase superfamily. Classic translation factor GTPase family. EF-G/EF-2 subfamily.

The protein resides in the cytoplasm. Functionally, catalyzes the GTP-dependent ribosomal translocation step during translation elongation. During this step, the ribosome changes from the pre-translocational (PRE) to the post-translocational (POST) state as the newly formed A-site-bound peptidyl-tRNA and P-site-bound deacylated tRNA move to the P and E sites, respectively. Catalyzes the coordinated movement of the two tRNA molecules, the mRNA and conformational changes in the ribosome. This is Elongation factor G 2 from Bordetella avium (strain 197N).